We begin with the raw amino-acid sequence, 135 residues long: uncharacterized protein (135 aa).

Residues 68–135 (DEVDNYIRVF…KKESEDEDEL (68 aa)) adopt a coiled-coil conformation. The disordered stretch occupies residues 88-135 (EKIVGKPPKSTSAPDIDELEEEPDEETEEKSEEKTEKKKKESEDEDEL). Positions 102–117 (DIDELEEEPDEETEEK) are enriched in acidic residues. A compositionally biased stretch (basic and acidic residues) spans 118–129 (SEEKTEKKKKES).

This is an uncharacterized protein from Acidianus hospitalis (AFV-1).